The chain runs to 506 residues: Tyrosine-protein phosphatase non-receptor type substrate 1 (506 aa).

Positions 1–29 are cleaved as a signal peptide; the sequence is MEPARPAPGRLRPLLCLLLAASNAWTGTA. The 116-residue stretch at 30 to 145 folds into the Ig-like V-type domain; sequence GDGELQVIQP…SGPGTHLTVS (116 aa). Topologically, residues 30–371 are extracellular; it reads GDGELQVIQP…PGPNDSNWTS (342 aa). Cysteines 55 and 121 form a disulfide. N-linked (GlcNAc...) asparagine glycosylation occurs at asparagine 92. Residues 136–159 are disordered; it reads SGPGTHLTVSAKPSPPVLSGPTVR. Ig-like C1-type domains lie at 148–248 and 255–348; these read PSPP…ANLS and PTLE…HTLE. 12 N-linked (GlcNAc...) asparagine glycosylation sites follow: asparagine 167, asparagine 179, asparagine 204, asparagine 210, asparagine 246, asparagine 270, asparagine 292, asparagine 311, asparagine 319, asparagine 344, asparagine 365, and asparagine 368. Cysteine 170 and cysteine 228 form a disulfide bridge. A disulfide bridge links cysteine 273 with cysteine 331. The tract at residues 344 to 364 is disordered; that stretch reads NHTLEVSAPQKDQDTGQTPGP. A helical membrane pass occupies residues 372-392; it reads IFIVVGVVCALLVALLIAALY. Residues 393–506 lie on the Cytoplasmic side of the membrane; it reads LLRIRQNKAK…EYASVQVQRK (114 aa). The tract at residues 402–468 is disordered; the sequence is KGSTSSTRLH…QARPPPVSED (67 aa). Residues 409 to 418 show a composition bias toward basic and acidic residues; the sequence is RLHEPEKNTR. Residues 419–429 are compositionally biased toward polar residues; the sequence is ETTQIQDNNDI. Position 431 is a phosphotyrosine; by Tyr-kinases (tyrosine 431). The SH2-binding signature appears at 432–435; sequence ADLN. Residues 441–446 carry the SH3-binding motif; sequence KSTPKA. The span at 444–456 shows a compositional bias: polar residues; sequence PKANEPNNHTEYA. A phosphotyrosine; by Tyr-kinases mark is found at tyrosine 455, tyrosine 472, and tyrosine 498. 3 short sequence motifs (SH2-binding) span residues 455-458, 472-475, and 498-501; these read YASI, YADL, and YASV. Residues 480–506 are disordered; that stretch reads LNRTPKQPAPKPEPSYSEYASVQVQRK. Residues 497–506 are compositionally biased toward polar residues; that stretch reads EYASVQVQRK.

Binds PTPN11 when tyrosine-phosphorylated, except in macrophages, where it primarily binds PTPN6. Binds GRB2 in vitro. Binds JAK2 irrespective of its phosphorylation status and forms a stable complex. Binds SCAP1 and/or SCAP2. The resulting complex recruits FYB1. Binds FGR and PTK2B. Interacts with TRIM2. In terms of processing, phosphorylated on tyrosine residues. As to expression, highly expressed in spleen macrophages. Detected in skin dendritic cells.

It is found in the membrane. Its function is as follows. Immunoglobulin-like cell surface receptor for CD47. Acts as docking protein and induces translocation of PTPN6, PTPN11 and other binding partners from the cytosol to the plasma membrane. Supports adhesion of cerebellar neurons, neurite outgrowth and glial cell attachment. May play a key role in intracellular signaling during synaptogenesis and in synaptic function. Involved in the negative regulation of receptor tyrosine kinase-coupled cellular responses induced by cell adhesion, growth factors or insulin. Mediates negative regulation of phagocytosis, mast cell activation and dendritic cell activation. CD47 binding prevents maturation of immature dendritic cells and inhibits cytokine production by mature dendritic cells. Plays a role in antiviral immunity and limits new world arenavirus infection by decreasing virus internalization. Receptor for THBS1. Interaction with THBS1 stimulates phosphorylation of SIRPA. In response to THBS1, involved in ROS signaling in non-phagocytic cells, stimulating NADPH oxidase-derived ROS production. The protein is Tyrosine-protein phosphatase non-receptor type substrate 1 (SIRPA) of Bos taurus (Bovine).